The primary structure comprises 80 residues: Putative antitoxin VapB44 (80 aa).

The segment at 40–68 is disordered; it reads NQNPQPAASQEDAFHGFEPLPHRGGAVSN.

Its function is as follows. Possibly the antitoxin component of a type II toxin-antitoxin (TA) system. Its cognate toxin is VapC44 (Potential). The chain is Putative antitoxin VapB44 (vapB44) from Mycobacterium tuberculosis (strain CDC 1551 / Oshkosh).